The primary structure comprises 439 residues: Ribulose bisphosphate carboxylase/oxygenase activase, chloroplastic (439 aa).

167-174 (GGKGQGKS) is a binding site for ATP.

The protein belongs to the RuBisCO activase family.

The protein localises to the plastid. It is found in the chloroplast stroma. Activation of RuBisCO (ribulose-1,5-bisphosphate carboxylase/oxygenase; EC 4.1.1.39) involves the ATP-dependent carboxylation of the epsilon-amino group of lysine leading to a carbamate structure. This Vigna radiata var. radiata (Mung bean) protein is Ribulose bisphosphate carboxylase/oxygenase activase, chloroplastic (RCA).